The primary structure comprises 326 residues: Biotin synthase (326 aa).

The region spanning G40–A264 is the Radical SAM core domain. Positions 55, 59, and 62 each coordinate [4Fe-4S] cluster. 4 residues coordinate [2Fe-2S] cluster: C99, C130, C190, and R262.

Belongs to the radical SAM superfamily. Biotin synthase family. As to quaternary structure, homodimer. Requires [4Fe-4S] cluster as cofactor. [2Fe-2S] cluster serves as cofactor.

The catalysed reaction is (4R,5S)-dethiobiotin + (sulfur carrier)-SH + 2 reduced [2Fe-2S]-[ferredoxin] + 2 S-adenosyl-L-methionine = (sulfur carrier)-H + biotin + 2 5'-deoxyadenosine + 2 L-methionine + 2 oxidized [2Fe-2S]-[ferredoxin]. Its pathway is cofactor biosynthesis; biotin biosynthesis; biotin from 7,8-diaminononanoate: step 2/2. In terms of biological role, catalyzes the conversion of dethiobiotin (DTB) to biotin by the insertion of a sulfur atom into dethiobiotin via a radical-based mechanism. This is Biotin synthase from Halorhodospira halophila (strain DSM 244 / SL1) (Ectothiorhodospira halophila (strain DSM 244 / SL1)).